The primary structure comprises 248 residues: DNA repair protein RecO (248 aa).

It belongs to the RecO family.

Involved in DNA repair and RecF pathway recombination. The sequence is that of DNA repair protein RecO from Bacillus cereus (strain B4264).